Reading from the N-terminus, the 682-residue chain is DNA-directed RNA polymerase subunit beta' (682 aa).

Residues cysteine 69, cysteine 71, cysteine 87, and cysteine 90 each coordinate Zn(2+). 3 residues coordinate Mg(2+): aspartate 491, aspartate 493, and aspartate 495.

Belongs to the RNA polymerase beta' chain family. RpoC1 subfamily. In terms of assembly, in plastids the minimal PEP RNA polymerase catalytic core is composed of four subunits: alpha, beta, beta', and beta''. When a (nuclear-encoded) sigma factor is associated with the core the holoenzyme is formed, which can initiate transcription. The cofactor is Mg(2+). Requires Zn(2+) as cofactor.

It localises to the plastid. It is found in the chloroplast. It catalyses the reaction RNA(n) + a ribonucleoside 5'-triphosphate = RNA(n+1) + diphosphate. In terms of biological role, DNA-dependent RNA polymerase catalyzes the transcription of DNA into RNA using the four ribonucleoside triphosphates as substrates. The chain is DNA-directed RNA polymerase subunit beta' from Lotus japonicus (Lotus corniculatus var. japonicus).